Consider the following 185-residue polypeptide: Ribosome-recycling factor (185 aa).

The segment at 163-185 (LTNEATKKIDAISKDKEKEITEG) is disordered. Positions 167-185 (ATKKIDAISKDKEKEITEG) are enriched in basic and acidic residues.

Belongs to the RRF family.

Its subcellular location is the cytoplasm. Its function is as follows. Responsible for the release of ribosomes from messenger RNA at the termination of protein biosynthesis. May increase the efficiency of translation by recycling ribosomes from one round of translation to another. This chain is Ribosome-recycling factor, found in Latilactobacillus sakei subsp. sakei (strain 23K) (Lactobacillus sakei subsp. sakei).